A 389-amino-acid polypeptide reads, in one-letter code: Tubby-like F-box protein 11 (389 aa).

In terms of domain architecture, F-box spans 36 to 82 (DYRWSEIPEELLREILIRVEAADGGGWPSRRSVVACAGVCRGWRLLM). Residues 250 to 289 (STMEPQGVASEPSEFPLLGTRSTLSRSQSKPLRSSSSHLK) are disordered. The span at 273–286 (LSRSQSKPLRSSSS) shows a compositional bias: low complexity.

It belongs to the TUB family. As to expression, ubiquitous.

In Arabidopsis thaliana (Mouse-ear cress), this protein is Tubby-like F-box protein 11.